The primary structure comprises 305 residues: N-acyl-aromatic-L-amino acid amidohydrolase (carboxylate-forming) (305 aa).

His15 and Glu18 together coordinate Zn(2+). Substrate-binding positions include Arg57 and 64 to 65; that span reads NR. His108 is a Zn(2+) binding site. 2 residues coordinate substrate: Glu171 and Tyr281.

The protein belongs to the AspA/AstE family. Aspartoacylase subfamily. In terms of assembly, homotetramer. The cofactor is Zn(2+).

The protein localises to the apical cell membrane. It localises to the cytoplasm. It catalyses the reaction an N-acyl-aromatic L-alpha-amino acid + H2O = an aromatic L-alpha-amino acid + a carboxylate. The catalysed reaction is an N-acetyl-L-cysteine-S-conjugate + H2O = an S-substituted L-cysteine + acetate. Functionally, plays an important role in deacetylating mercapturic acids in kidney proximal tubules. This is N-acyl-aromatic-L-amino acid amidohydrolase (carboxylate-forming) (acy3) from Xenopus laevis (African clawed frog).